The primary structure comprises 251 residues: Flap endonuclease Xni (251 aa).

Asp104 is a binding site for Mg(2+). One can recognise a 5'-3' exonuclease domain in the interval Val160 to Leu249. The K(+) site is built by Leu171, Ala172, Pro180, Val182, and Ile185. The interaction with DNA stretch occupies residues Gly184 to Ser189.

The protein belongs to the Xni family. Mg(2+) is required as a cofactor. Requires K(+) as cofactor.

In terms of biological role, has flap endonuclease activity. During DNA replication, flap endonucleases cleave the 5'-overhanging flap structure that is generated by displacement synthesis when DNA polymerase encounters the 5'-end of a downstream Okazaki fragment. The protein is Flap endonuclease Xni of Escherichia coli O7:K1 (strain IAI39 / ExPEC).